Consider the following 309-residue polypeptide: Ribokinase (309 aa).

Substrate is bound by residues 14–16, 42–46, and Glu143; these read NAD and GKGAN. ATP is bound by residues Asn187 and 223 to 228; that span reads TLGSRG. The K(+) site is built by Asp249 and Ile251. Residues 254 to 255 and His279 each bind ATP; that span reads GD. A substrate-binding site is contributed by Asp255. Asp255 serves as the catalytic Proton acceptor. 4 residues coordinate K(+): Ala285, Arg288, Gly290, and Ser294.

Belongs to the carbohydrate kinase PfkB family. Ribokinase subfamily. As to quaternary structure, homodimer. Mg(2+) serves as cofactor.

Its subcellular location is the cytoplasm. It catalyses the reaction D-ribose + ATP = D-ribose 5-phosphate + ADP + H(+). Its pathway is carbohydrate metabolism; D-ribose degradation; D-ribose 5-phosphate from beta-D-ribopyranose: step 2/2. With respect to regulation, activated by a monovalent cation that binds near, but not in, the active site. The most likely occupant of the site in vivo is potassium. Ion binding induces a conformational change that may alter substrate affinity. Catalyzes the phosphorylation of ribose at O-5 in a reaction requiring ATP and magnesium. The resulting D-ribose-5-phosphate can then be used either for sythesis of nucleotides, histidine, and tryptophan, or as a component of the pentose phosphate pathway. In Escherichia coli O157:H7, this protein is Ribokinase.